The following is a 496-amino-acid chain: UDP-N-acetylmuramate--L-alanine ligase (496 aa).

Position 122–128 (glycine 122–threonine 128) interacts with ATP.

Belongs to the MurCDEF family.

The protein localises to the cytoplasm. The enzyme catalyses UDP-N-acetyl-alpha-D-muramate + L-alanine + ATP = UDP-N-acetyl-alpha-D-muramoyl-L-alanine + ADP + phosphate + H(+). It functions in the pathway cell wall biogenesis; peptidoglycan biosynthesis. Functionally, cell wall formation. This chain is UDP-N-acetylmuramate--L-alanine ligase, found in Mycolicibacterium paratuberculosis (strain ATCC BAA-968 / K-10) (Mycobacterium paratuberculosis).